The primary structure comprises 354 residues: 3-isopropylmalate dehydrogenase (354 aa).

Position 73–86 (73–86 (GPAYDKLDRPLRPE)) interacts with NAD(+). Arg93, Arg103, Arg131, and Asp221 together coordinate substrate. Mg(2+) is bound by residues Asp221, Asp245, and Asp249. NAD(+) is bound at residue 279-291 (GSAPDIAGQNLAN).

It belongs to the isocitrate and isopropylmalate dehydrogenases family. LeuB type 1 subfamily. As to quaternary structure, homodimer. It depends on Mg(2+) as a cofactor. Requires Mn(2+) as cofactor.

The protein resides in the cytoplasm. The catalysed reaction is (2R,3S)-3-isopropylmalate + NAD(+) = 4-methyl-2-oxopentanoate + CO2 + NADH. The protein operates within amino-acid biosynthesis; L-leucine biosynthesis; L-leucine from 3-methyl-2-oxobutanoate: step 3/4. Catalyzes the oxidation of 3-carboxy-2-hydroxy-4-methylpentanoate (3-isopropylmalate) to 3-carboxy-4-methyl-2-oxopentanoate. The product decarboxylates to 4-methyl-2 oxopentanoate. This Chromobacterium violaceum (strain ATCC 12472 / DSM 30191 / JCM 1249 / CCUG 213 / NBRC 12614 / NCIMB 9131 / NCTC 9757 / MK) protein is 3-isopropylmalate dehydrogenase.